The following is a 101-amino-acid chain: MTDANPAFDTVHPSGHILVRSCRGGYMHSVSLSEAAMETDAETLAEAILLTADVSCLKALLEVRNEIVAAGHTPSAQVPTTDDLNVAIEKLLAHQLRRRNR.

This is an uncharacterized protein from Mycobacterium tuberculosis (strain CDC 1551 / Oshkosh).